The following is a 224-amino-acid chain: Putative cytochrome c-type biogenesis protein DbsD-like (224 aa).

The next 5 membrane-spanning stretches (helical) occupy residues 32–52 (FIFL…ILPV), 74–94 (FLFC…ATLI), 104–124 (GIPT…LNIV), 150–170 (GIGI…LVWI), and 176–196 (IFTG…PIII).

It belongs to the DsbD family.

The protein resides in the plastid. Its subcellular location is the chloroplast membrane. Functionally, could be involved in cytochrome c synthesis. The chain is Putative cytochrome c-type biogenesis protein DbsD-like from Pyropia yezoensis (Susabi-nori).